A 294-amino-acid chain; its full sequence is Kynurenine formamidase (294 aa).

The segment covering 1–14 (MSRWKDMNKDELER) has biased composition (basic and acidic residues). The disordered stretch occupies residues 1-20 (MSRWKDMNKDELERQFSPSQ). The short motif at 84–88 (HGGYW) is the HGGXW element. Ser153 (nucleophile) is an active-site residue. Catalysis depends on residues Asp236 and His269.

It belongs to the kynurenine formamidase family. Homodimer.

The protein localises to the cytoplasm. It localises to the cytosol. Its subcellular location is the nucleus. It carries out the reaction N-formyl-L-kynurenine + H2O = L-kynurenine + formate + H(+). The protein operates within amino-acid degradation; L-tryptophan degradation via kynurenine pathway; L-kynurenine from L-tryptophan: step 2/2. Catalyzes the hydrolysis of N-formyl-L-kynurenine to L-kynurenine, the second step in the kynurenine pathway of tryptophan degradation. Kynurenine may be further oxidized to nicotinic acid, NAD(H) and NADP(H). Required for elimination of toxic metabolites. In Salmo salar (Atlantic salmon), this protein is Kynurenine formamidase (afmid).